The primary structure comprises 162 residues: Glycine cleavage system H protein, mitochondrial (162 aa).

A mitochondrion-targeting transit peptide spans 1–31; that stretch reads MALRMWASSTANALRLSSATRPHFSPLSRCF. The Lipoyl-binding domain maps to 53-135; it reads VATIGITDHA…YEDGWMIKVK (83 aa). K94 carries the N6-lipoyllysine modification.

It belongs to the GcvH family. As to quaternary structure, the glycine cleavage system is composed of four proteins: P, T, L and H. It depends on (R)-lipoate as a cofactor.

It localises to the mitochondrion. In terms of biological role, the glycine cleavage system catalyzes the degradation of glycine. The H protein shuttles the methylamine group of glycine from the P protein to the T protein. This Flaveria anomala (Yellowtops) protein is Glycine cleavage system H protein, mitochondrial (GDCSH).